Here is a 341-residue protein sequence, read N- to C-terminus: Very-long-chain 3-oxoacyl-CoA reductase (341 aa).

A helical transmembrane segment spans residues 22-42 (AVTGFLLVGIASFAAPLISTI). Positions 67, 123, 131, 150, 217, 221, 250, and 252 each coordinate NADP(+). Tyr-217 acts as the Proton donor in catalysis. The active-site Lowers pKa of active site Tyr is Lys-221.

Belongs to the short-chain dehydrogenases/reductases (SDR) family.

It is found in the endoplasmic reticulum membrane. It catalyses the reaction a very-long-chain (3R)-3-hydroxyacyl-CoA + NADP(+) = a very-long-chain 3-oxoacyl-CoA + NADPH + H(+). Its pathway is lipid metabolism; fatty acid biosynthesis. Its function is as follows. Component of the microsomal membrane bound fatty acid elongation system, which produces the 26-carbon very long-chain fatty acids (VLCFA) from palmitate. Catalyzes the reduction of the 3-ketoacyl-CoA intermediate that is formed in each cycle of fatty acid elongation. VLCFAs serve as precursors for ceramide and sphingolipids. In Pyrenophora tritici-repentis (strain Pt-1C-BFP) (Wheat tan spot fungus), this protein is Very-long-chain 3-oxoacyl-CoA reductase.